Consider the following 46-residue polypeptide: Defensin Tk-AMP-D6 (46 aa).

4 cysteine pairs are disulfide-bonded: Cys3–Cys46, Cys14–Cys34, Cys20–Cys40, and Cys24–Cys42.

Functionally, plant defense peptide. In Triticum kiharae (Wheat), this protein is Defensin Tk-AMP-D6.